A 141-amino-acid chain; its full sequence is Large ribosomal subunit protein uL11 (141 aa).

Belongs to the universal ribosomal protein uL11 family. As to quaternary structure, part of the ribosomal stalk of the 50S ribosomal subunit. Interacts with L10 and the large rRNA to form the base of the stalk. L10 forms an elongated spine to which L12 dimers bind in a sequential fashion forming a multimeric L10(L12)X complex. One or more lysine residues are methylated.

Forms part of the ribosomal stalk which helps the ribosome interact with GTP-bound translation factors. In Aliarcobacter butzleri (strain RM4018) (Arcobacter butzleri), this protein is Large ribosomal subunit protein uL11.